Reading from the N-terminus, the 540-residue chain is T-complex protein 1 subunit theta (540 aa).

This sequence belongs to the TCP-1 chaperonin family. As to quaternary structure, heterooligomeric complex of about 850 to 900 kDa that forms two stacked rings, 12 to 16 nm in diameter.

The protein localises to the cytoplasm. In terms of biological role, molecular chaperone; assists the folding of proteins upon ATP hydrolysis. Known to play a role, in vitro, in the folding of actin and tubulin. In yeast may play a role in mitotic spindle formation. The protein is T-complex protein 1 subunit theta (CCT8) of Candida albicans (Yeast).